The primary structure comprises 221 residues: Growth hormone-releasing peptides (221 aa).

A signal peptide spans 1–25 (MHLKIGTLTIRTIMLFTLCTFLTLF). Residues 26-95 (AFSTCFDETK…QPENEFLQER (70 aa)) constitute a propeptide that is removed on maturation. F107 bears the Phenylalanine amide mark. Positions 110 to 127 (TSDDKIAKSIPSFDKIAK) are excised as a propeptide. F136, F156, and F176 each carry phenylalanine amide. The propeptide occupies 179-221 (TPHSDRLQYEMNSHPLELKNPEEDSDRKKRQAMTFRIRTDLQM).

The protein belongs to the FARP (FMRFamide related peptide) family. Observed in the suprachiasmatic nucleus and in several telencephalic and diencephalic regions.

The protein resides in the secreted. In terms of biological role, primary role is to release GH from the pituitary. May act as an endogenous ligand in the bullfrog hypothalamo-hypophysial system. The sequence is that of Growth hormone-releasing peptides from Aquarana catesbeiana (American bullfrog).